A 430-amino-acid polypeptide reads, in one-letter code: Serine--tRNA ligase (430 aa).

Residue 237 to 239 (TAE) coordinates L-serine. Residue 268–270 (RSE) participates in ATP binding. Glu-291 contacts L-serine. 355–358 (EISS) is an ATP binding site. L-serine is bound at residue Ser-391.

This sequence belongs to the class-II aminoacyl-tRNA synthetase family. Type-1 seryl-tRNA synthetase subfamily. As to quaternary structure, homodimer. The tRNA molecule binds across the dimer.

Its subcellular location is the cytoplasm. The catalysed reaction is tRNA(Ser) + L-serine + ATP = L-seryl-tRNA(Ser) + AMP + diphosphate + H(+). The enzyme catalyses tRNA(Sec) + L-serine + ATP = L-seryl-tRNA(Sec) + AMP + diphosphate + H(+). It participates in aminoacyl-tRNA biosynthesis; selenocysteinyl-tRNA(Sec) biosynthesis; L-seryl-tRNA(Sec) from L-serine and tRNA(Sec): step 1/1. Its function is as follows. Catalyzes the attachment of serine to tRNA(Ser). Is also able to aminoacylate tRNA(Sec) with serine, to form the misacylated tRNA L-seryl-tRNA(Sec), which will be further converted into selenocysteinyl-tRNA(Sec). The sequence is that of Serine--tRNA ligase from Shigella dysenteriae serotype 1 (strain Sd197).